The following is a 93-amino-acid chain: Putative pterin-4-alpha-carbinolamine dehydratase (93 aa).

This sequence belongs to the pterin-4-alpha-carbinolamine dehydratase family.

It carries out the reaction (4aS,6R)-4a-hydroxy-L-erythro-5,6,7,8-tetrahydrobiopterin = (6R)-L-erythro-6,7-dihydrobiopterin + H2O. The polypeptide is Putative pterin-4-alpha-carbinolamine dehydratase (Roseiflexus sp. (strain RS-1)).